The sequence spans 644 residues: Acetyl-coenzyme A synthetase 2 (644 aa).

CoA-binding positions include R189–K192, T307, and N331. ATP is bound by residues G383 to P385, D407 to T412, D496, and R511. CoA is bound at residue S519. Residue R522 participates in ATP binding. Residues V533, H535, and V538 each coordinate Mg(2+). An N6-acetyllysine modification is found at K605.

It belongs to the ATP-dependent AMP-binding enzyme family. Mg(2+) is required as a cofactor. In terms of processing, acetylated. Deacetylation by the SIR2-homolog deacetylase activates the enzyme.

The enzyme catalyses acetate + ATP + CoA = acetyl-CoA + AMP + diphosphate. Catalyzes the conversion of acetate into acetyl-CoA (AcCoA), an essential intermediate at the junction of anabolic and catabolic pathways. AcsA undergoes a two-step reaction. In the first half reaction, AcsA combines acetate with ATP to form acetyl-adenylate (AcAMP) intermediate. In the second half reaction, it can then transfer the acetyl group from AcAMP to the sulfhydryl group of CoA, forming the product AcCoA. The polypeptide is Acetyl-coenzyme A synthetase 2 (Pseudomonas putida (strain ATCC 47054 / DSM 6125 / CFBP 8728 / NCIMB 11950 / KT2440)).